Consider the following 290-residue polypeptide: Agmatinase (290 aa).

Positions 112, 135, 137, 139, 216, and 218 each coordinate Mn(2+).

This sequence belongs to the arginase family. Agmatinase subfamily. The cofactor is Mn(2+).

It carries out the reaction agmatine + H2O = urea + putrescine. The protein operates within amine and polyamine biosynthesis; putrescine biosynthesis via agmatine pathway; putrescine from agmatine: step 1/1. Its function is as follows. Catalyzes the formation of putrescine from agmatine. The protein is Agmatinase (speB) of Bacillus subtilis (strain 168).